Reading from the N-terminus, the 417-residue chain is Serine/threonine-protein kinase PkaB (417 aa).

In terms of domain architecture, Protein kinase spans Y9–L270. ATP is bound by residues L15 to V23 and K36. Residue D130 is the Proton acceptor of the active site. Disordered stretches follow at residues L279–T371 and L395–P417. Acidic residues predominate over residues D280–P293. Composition is skewed to low complexity over residues D294–E308 and G349–R368. Polar residues predominate over residues D408–P417.

The protein belongs to the protein kinase superfamily. Ser/Thr protein kinase family. In terms of processing, autophosphorylated mainly at Thr.

It carries out the reaction L-seryl-[protein] + ATP = O-phospho-L-seryl-[protein] + ADP + H(+). The enzyme catalyses L-threonyl-[protein] + ATP = O-phospho-L-threonyl-[protein] + ADP + H(+). The protein is Serine/threonine-protein kinase PkaB (pkaB) of Streptomyces coelicolor (strain ATCC BAA-471 / A3(2) / M145).